Consider the following 100-residue polypeptide: Nucleoid-associated protein RoseRS_1534 (100 aa).

This sequence belongs to the YbaB/EbfC family. In terms of assembly, homodimer.

The protein resides in the cytoplasm. Its subcellular location is the nucleoid. Its function is as follows. Binds to DNA and alters its conformation. May be involved in regulation of gene expression, nucleoid organization and DNA protection. The polypeptide is Nucleoid-associated protein RoseRS_1534 (Roseiflexus sp. (strain RS-1)).